Reading from the N-terminus, the 95-residue chain is Small ribosomal subunit protein bS16 (95 aa).

It belongs to the bacterial ribosomal protein bS16 family.

This is Small ribosomal subunit protein bS16 from Thermotoga maritima (strain ATCC 43589 / DSM 3109 / JCM 10099 / NBRC 100826 / MSB8).